We begin with the raw amino-acid sequence, 115 residues long: Insulin (115 aa).

The signal sequence occupies residues Met1 to Thr26. Disulfide bonds link Cys33-Cys101, Cys45-Cys114, and Cys100-Cys105. A propeptide spans Asp60–Ser92 (c peptide).

The protein belongs to the insulin family. As to quaternary structure, heterodimer of a B chain and an A chain linked by two disulfide bonds.

It localises to the secreted. In terms of biological role, insulin decreases blood glucose concentration. It increases cell permeability to monosaccharides, amino acids and fatty acids. It accelerates glycolysis, the pentose phosphate cycle, and glycogen synthesis in liver. The protein is Insulin (ins) of Myxine glutinosa (Atlantic hagfish).